We begin with the raw amino-acid sequence, 1032 residues long: uncharacterized protein (1032 aa).

3 disordered regions span residues 54–80 (NNNNNNNNNNNNNNNNNNNNNNNNNNN), 391–451 (QLQI…QTHL), and 884–934 (INNE…SKVK). Over residues 884–907 (INNENNNENNNNYNGNINSNNNNN) the composition is skewed to low complexity.

This is an uncharacterized protein from Dictyostelium discoideum (Social amoeba).